The primary structure comprises 68 residues: Conotoxin Cal14.13b (68 aa).

The signal sequence occupies residues 1-20; that stretch reads MKLCVVIVLLMLAMPFNGGE. Residues 21-68 constitute a propeptide that is removed on maturation; the sequence is ASRFFNQHARSQRSGMKTRGIWCDPPCPEGETCRGGECSDEFNGDMGR. M66 carries the post-translational modification Methionine amide.

Post-translationally, contains 2 disulfide bonds. As to expression, expressed by the venom duct.

The protein resides in the secreted. Functionally, probable neurotoxin with unknown target. Possibly targets ion channels. This is Conotoxin Cal14.13b from Californiconus californicus (California cone).